The following is a 171-amino-acid chain: Ribosome maturation factor RimM (171 aa).

The PRC barrel domain occupies 96–170; that stretch reads AEGEYYYHEI…LVTIHVTEGL (75 aa).

This sequence belongs to the RimM family. Binds ribosomal protein uS19.

The protein resides in the cytoplasm. In terms of biological role, an accessory protein needed during the final step in the assembly of 30S ribosomal subunit, possibly for assembly of the head region. Essential for efficient processing of 16S rRNA. May be needed both before and after RbfA during the maturation of 16S rRNA. It has affinity for free ribosomal 30S subunits but not for 70S ribosomes. The chain is Ribosome maturation factor RimM from Bacillus anthracis (strain A0248).